Here is a 1058-residue protein sequence, read N- to C-terminus: Leucine--tRNA ligase, cytoplasmic (1058 aa).

Positions Pro48–His58 match the 'HIGH' region motif. The 'KMSKS' region signature appears at Lys711–Ser715. Lys714 contacts ATP.

The protein belongs to the class-I aminoacyl-tRNA synthetase family.

It is found in the cytoplasm. The enzyme catalyses tRNA(Leu) + L-leucine + ATP = L-leucyl-tRNA(Leu) + AMP + diphosphate. In Dictyostelium discoideum (Social amoeba), this protein is Leucine--tRNA ligase, cytoplasmic (leuS).